A 344-amino-acid chain; its full sequence is Putative glycosyltransferase EpsH (344 aa).

Belongs to the glycosyltransferase 2 family.

In terms of biological role, may be involved in the production of the exopolysaccharide (EPS) component of the extracellular matrix during biofilm formation. EPS is responsible for the adhesion of chains of cells into bundles. Required for biofilm maintenance. The sequence is that of Putative glycosyltransferase EpsH (epsH) from Bacillus subtilis (strain 168).